We begin with the raw amino-acid sequence, 864 residues long: Putative Gly-rich membrane protein Bcell_0380 (864 aa).

A helical membrane pass occupies residues 7–27; the sequence is ITFLAAFICIIFVIYAIYHSV. Positions 372 to 399 are disordered; sequence TVENSFYDEDTTGQSDTGKGTPMSTADM. The segment covering 383 to 395 has biased composition (polar residues); sequence TGQSDTGKGTPMS.

Its subcellular location is the cell membrane. This is Putative Gly-rich membrane protein Bcell_0380 from Evansella cellulosilytica (strain ATCC 21833 / DSM 2522 / FERM P-1141 / JCM 9156 / N-4) (Bacillus cellulosilyticus).